The sequence spans 148 residues: Small ribosomal subunit protein uS9 (148 aa).

This sequence belongs to the universal ribosomal protein uS9 family.

This Drosophila melanogaster (Fruit fly) protein is Small ribosomal subunit protein uS9 (RpS16).